The chain runs to 582 residues: Protein NRT1/ PTR FAMILY 5.2 (582 aa).

Helical transmembrane passes span 77-97 (WVGT…ALLG), 100-120 (ITFV…TLSV), 141-161 (ASVL…IGTG), 189-209 (FFNW…TVLV), 217-237 (WTLG…IFLL), 334-354 (PVLF…TLFV), 370-390 (IPPA…IVLY), 408-428 (ITLL…MIVA), 452-472 (LPLT…ADSF), 493-515 (GTSY…LSTV), and 538-558 (YYYL…LVVV).

Belongs to the major facilitator superfamily. Proton-dependent oligopeptide transporter (POT/PTR) (TC 2.A.17) family. Expressed in roots. Detected in shoots, leaves and flowers.

The protein resides in the membrane. Functionally, peptide transporter involved in stress tolerance in seeds during germination and in defense against virulent bacterial pathogens. The chain is Protein NRT1/ PTR FAMILY 5.2 (NPF5.2) from Arabidopsis thaliana (Mouse-ear cress).